The sequence spans 335 residues: Nucleoid-associated protein CKO_00588 (335 aa).

The protein belongs to the YejK family.

The protein localises to the cytoplasm. It localises to the nucleoid. This Citrobacter koseri (strain ATCC BAA-895 / CDC 4225-83 / SGSC4696) protein is Nucleoid-associated protein CKO_00588.